Consider the following 862-residue polypeptide: Cell surface glycoprotein (862 aa).

The first 34 residues, 1-34, serve as a signal peptide directing secretion; that stretch reads MTDTQQKIKAVLLTVLMVTSVFAATIAFSGAAAA. Disordered stretches follow at residues 35–60, 101–126, and 200–220; these read SERGAGDSYTTGPTDGNQDNVDSAGN, ILLESPIPQDQPTGRYTANPGVEGTE, and VNTNVNNDDHPNPAADGDRDD. Positions 43-57 are enriched in polar residues; that stretch reads YTTGPTDGNQDNVDS. Basic and acidic residues predominate over residues 206–220; that stretch reads NDDHPNPAADGDRDD. 5 N-linked (GlcNAc...) asparagine glycosylation sites follow: asparagine 442, asparagine 520, asparagine 550, asparagine 702, and asparagine 761. Residues 752–838 form a disordered region; it reads LSDENVEPGN…TEEATTEATG (87 aa). A compositionally biased stretch (acidic residues) spans 784–801; sequence SLEEEQPATDTPEPDTDT. The segment covering 802–815 has biased composition (low complexity); it reads PEPATDTPEPATDT. The segment covering 816 to 833 has biased composition (acidic residues); sequence PEPDTDTPEPDTETEEAT. A helical transmembrane segment spans residues 838 to 858; sequence GPGFTAAIALIALVAAALLAV. Positions 839–841 match the PGF sorting signal motif; it reads PGF.

Belongs to the halobacterial S-layer protein family. Post-translationally, glycosylated. Cleaved by the archaeosortase ArtA at the C-terminus, with removal of a short hydrophobic segment. In terms of processing, lipidation.

It localises to the secreted. The protein resides in the cell wall. It is found in the S-layer. Its subcellular location is the cell membrane. S-layer protein. The S-layer is a paracrystalline mono-layered assembly of proteins which coat the surface of the cell. The chain is Cell surface glycoprotein from Haloarcula japonica (strain ATCC 49778 / DSM 6131 / JCM 7785 / NBRC 101032 / NCIMB 13157 / TR-1).